A 159-amino-acid chain; its full sequence is Mesogenin-1 (159 aa).

The segment at 79-101 (PGQARLPKGTKVRMSAQRRRKAS) is disordered. A compositionally biased stretch (basic residues) spans 86 to 100 (KGTKVRMSAQRRRKA). The region spanning 95–149 (QRRRKASEREKLRMRTLADALHTLRNYLPPAYSQRGQPLTKIQTLKCTIKYISEL) is the bHLH domain.

The protein localises to the nucleus. Involved in specifying the paraxial, but not dorsal, mesoderm. May regulate the expression of T-box transcription factors required for mesoderm formation and differentiation. The polypeptide is Mesogenin-1 (MSGN1) (Gallus gallus (Chicken)).